We begin with the raw amino-acid sequence, 243 residues long: Ras-related protein Rab-12 (243 aa).

The residue at position 1 (methionine 1) is an N-acetylmethionine. The tract at residues methionine 1–arginine 36 is disordered. A phosphoserine mark is found at serine 20 and serine 24. Glycine 51, valine 52, glycine 53, lysine 54, threonine 55, serine 72, and threonine 73 together coordinate GTP. Residue threonine 55 participates in Mg(2+) binding. 2 short sequence motifs (switch) span residues aspartate 64 to phenylalanine 78 and aspartate 96 to serine 113. The Mg(2+) site is built by threonine 73 and aspartate 96. Glycine 99 lines the GTP pocket. Serine 105 carries the phosphoserine modification. GTP is bound by residues asparagine 154, lysine 155, aspartate 157, serine 185, alanine 186, and lysine 187. S-geranylgeranyl cysteine attachment occurs at residues cysteine 242 and cysteine 243.

This sequence belongs to the small GTPase superfamily. Rab family. In terms of assembly, interacts with RABIF and OPTN. Interacts with LRRK2; interaction facilitates phosphorylation of Ser-105. Interacts with GDI1, GDI2 and CHM; these interactions are disrupted by phosphorylation on Ser-105. Interacts with RILPL1 and RILPL2; these interactions are dependent on phosphorylation of Ser-105. It depends on Mg(2+) as a cofactor. Phosphorylation of Ser-105 in the switch II region by LRRK2 prevents the association of RAB regulatory proteins, including CHM and RAB GDP dissociation inhibitors GDI1 and GDI2. As to expression, highest levels in skeletal and cardiac muscle. Also found in comparable amounts in brain, spinal cord and lung. Also detected in testis where it is expressed by Sertoli cells of the seminiferous tubules (at protein level).

The protein localises to the recycling endosome membrane. The protein resides in the lysosome membrane. Its subcellular location is the golgi apparatus membrane. It is found in the cytoplasmic vesicle. It localises to the autophagosome. It catalyses the reaction GTP + H2O = GDP + phosphate + H(+). With respect to regulation, regulated by guanine nucleotide exchange factors (GEFs) including DENND3 which promote the exchange of bound GDP for free GTP. Regulated by GTPase activating proteins (GAPs) which increase the GTP hydrolysis activity. Inhibited by GDP dissociation inhibitors (GDIs). Its function is as follows. The small GTPases Rab are key regulators of intracellular membrane trafficking, from the formation of transport vesicles to their fusion with membranes. Rabs cycle between an inactive GDP-bound form and an active GTP-bound form that is able to recruit to membranes different sets of downstream effectors directly responsible for vesicle formation, movement, tethering and fusion. RAB12 may play a role in protein transport from recycling endosomes to lysosomes regulating, for instance, the degradation of the transferrin receptor. Involved in autophagy. The protein is Ras-related protein Rab-12 of Rattus norvegicus (Rat).